A 278-amino-acid chain; its full sequence is HTH-type transcriptional activator RhaS (278 aa).

Residues 174 to 272 (NLLLAWLEDH…NWSPRDIRQG (99 aa)) form the HTH araC/xylS-type domain. DNA-binding regions (H-T-H motif) lie at residues 191 to 212 (DAVA…KQQT) and 239 to 262 (VTDI…HREF).

As to quaternary structure, binds DNA as a dimer.

It localises to the cytoplasm. Its function is as follows. Activates expression of the rhaBAD and rhaT operons. The polypeptide is HTH-type transcriptional activator RhaS (Shigella boydii serotype 18 (strain CDC 3083-94 / BS512)).